The sequence spans 327 residues: GMP reductase (327 aa).

Cysteine 176 (thioimidate intermediate) is an active-site residue. 205–228 contributes to the NADP(+) binding site; sequence IIADGGIRTHGDIAKSIRFGASMV.

Belongs to the IMPDH/GMPR family. GuaC type 2 subfamily.

It carries out the reaction IMP + NH4(+) + NADP(+) = GMP + NADPH + 2 H(+). Functionally, catalyzes the irreversible NADPH-dependent deamination of GMP to IMP. It functions in the conversion of nucleobase, nucleoside and nucleotide derivatives of G to A nucleotides, and in maintaining the intracellular balance of A and G nucleotides. The sequence is that of GMP reductase from Streptococcus pyogenes serotype M3 (strain ATCC BAA-595 / MGAS315).